The primary structure comprises 335 residues: Calcium/calmodulin-dependent protein kinase type I (335 aa).

The Protein kinase domain maps to 31–291; the sequence is YRVGRVLGGG…AADALKHPFL (261 aa). 37 to 45 is an ATP binding site; it reads LGGGTYATV. The active-site Proton acceptor is Asp-154. The residue at position 192 (Thr-192) is a Phosphothreonine; by autocatalysis. Residues 310 to 334 are calmodulin-binding; that stretch reads NARKTFRTAYNAVRAFNTWKKLENK.

This sequence belongs to the protein kinase superfamily. CAMK Ser/Thr protein kinase family. CaMK subfamily.

It is found in the cytoplasm. The catalysed reaction is L-seryl-[protein] + ATP = O-phospho-L-seryl-[protein] + ADP + H(+). It carries out the reaction L-threonyl-[protein] + ATP = O-phospho-L-threonyl-[protein] + ADP + H(+). Its function is as follows. Important in cell cycle regulation. In Schizosaccharomyces pombe (strain 972 / ATCC 24843) (Fission yeast), this protein is Calcium/calmodulin-dependent protein kinase type I (cmk1).